Here is a 325-residue protein sequence, read N- to C-terminus: Iodotyrosine dehalogenase 1 homolog (325 aa).

The helical transmembrane segment at 42–62 threads the bilayer; it reads VLNVLFTLGVILFVIYQVASL. Over 63-325 the chain is Cytoplasmic; it reads LHRMNKRVEK…KPVEHITKLY (263 aa). FMN is bound by residues 135 to 139, 163 to 164, 273 to 275, and R315; these read RRSCR, SV, and VTS.

Belongs to the nitroreductase family. FMN serves as cofactor. As to expression, expressed in body-wall, anal depressor and vulval muscles.

It localises to the membrane. Its function is as follows. May contribute to coordination of muscle contraction as regulatory subunit of the nonessential sup-9 potassium channel complex. May act downstream of sup-10. This Caenorhabditis elegans protein is Iodotyrosine dehalogenase 1 homolog.